Consider the following 348-residue polypeptide: Erythronate-4-phosphate dehydrogenase (348 aa).

Residues Thr-46 and Thr-67 each coordinate substrate. An NAD(+)-binding site is contributed by Asp-147. Arg-209 is a catalytic residue. Residue Asp-233 participates in NAD(+) binding. Residue Glu-238 is part of the active site. His-255 serves as the catalytic Proton donor. Residue Gly-258 participates in NAD(+) binding. Tyr-259 provides a ligand contact to substrate.

Belongs to the D-isomer specific 2-hydroxyacid dehydrogenase family. PdxB subfamily. Homodimer.

The protein localises to the cytoplasm. It carries out the reaction 4-phospho-D-erythronate + NAD(+) = (R)-3-hydroxy-2-oxo-4-phosphooxybutanoate + NADH + H(+). It functions in the pathway cofactor biosynthesis; pyridoxine 5'-phosphate biosynthesis; pyridoxine 5'-phosphate from D-erythrose 4-phosphate: step 2/5. Functionally, catalyzes the oxidation of erythronate-4-phosphate to 3-hydroxy-2-oxo-4-phosphonooxybutanoate. The chain is Erythronate-4-phosphate dehydrogenase from Bacteroides fragilis (strain ATCC 25285 / DSM 2151 / CCUG 4856 / JCM 11019 / LMG 10263 / NCTC 9343 / Onslow / VPI 2553 / EN-2).